The following is a 326-amino-acid chain: Protein ORF5 in retron Ec67 (326 aa).

The interval 1 to 24 (MGKSKKNRAAATNQLKHKSQTSAE) is disordered. Residues 10 to 24 (AATNQLKHKSQTSAE) show a composition bias toward polar residues.

The protein belongs to the phage portal family. PBSX subfamily.

This chain is Protein ORF5 in retron Ec67, found in Escherichia coli.